Consider the following 315-residue polypeptide: MAALGVLESDLPSAVTLLKNLQEQVMAVTAQVKSLTQKVQAGAYPTEKGLSFLEVKDQLLLMYLMDLTHLILDKASGGSLQGHDAVLRLVEIRTVLEKLRPLDQKLKYQIDKLIKTAVTGSLSENDPLRFKPHPSNMMSKLSSEDEEEDEAEDDQSEASGKKSVKGVSKKYVPPRLVPVHYDETEAEREKKRLERAKRRALSSSVIRELKEQYSDAPEEIRDARHPHVTRQSQEDQHRINYEESMMVRLSVSKREKGRRKRANVMSSQLHSLTHFSDISALTGGTVHLDEDQNPIKKRKKIPQKGRKKKGFRRRR.

Position 2 is an N-acetylalanine (Ala2). Positions 13–41 form a coiled coil; it reads SAVTLLKNLQEQVMAVTAQVKSLTQKVQA. The necessary for interaction with EIF4E stretch occupies residues 41-174; that stretch reads AGAYPTEKGL…KGVSKKYVPP (134 aa). A phosphoserine mark is found at Ser121, Ser142, and Ser143. Residues 124–169 are disordered; sequence ENDPLRFKPHPSNMMSKLSSEDEEEDEAEDDQSEASGKKSVKGVSK. A compositionally biased stretch (acidic residues) spans 144-156; it reads EDEEEDEAEDDQS. Residues 181-205 adopt a coiled-coil conformation; it reads YDETEAEREKKRLERAKRRALSSSV. Ser204 and Ser214 each carry phosphoserine. Residues 277–315 are disordered; it reads DISALTGGTVHLDEDQNPIKKRKKIPQKGRKKKGFRRRR. Positions 295–315 are enriched in basic residues; it reads IKKRKKIPQKGRKKKGFRRRR.

It belongs to the SAS10 family. As to quaternary structure, part of the small subunit (SSU) processome, composed of more than 70 proteins and the RNA chaperone small nucleolar RNA (snoRNA) U3. Interacts with CPEB1 and EIF4E.

Its subcellular location is the nucleus. The protein resides in the nucleolus. It localises to the chromosome. The protein localises to the centromere. It is found in the cytoplasm. Its subcellular location is the cell projection. The protein resides in the axon. It localises to the dendrite. The protein localises to the filopodium. In terms of biological role, part of the small subunit (SSU) processome, first precursor of the small eukaryotic ribosomal subunit. During the assembly of the SSU processome in the nucleolus, many ribosome biogenesis factors, an RNA chaperone and ribosomal proteins associate with the nascent pre-rRNA and work in concert to generate RNA folding, modifications, rearrangements and cleavage as well as targeted degradation of pre-ribosomal RNA by the RNA exosome. Its dissociation from the complex determines the transition from state pre-A1 to state pre-A1*. Inhibits mRNA translation in a cytoplasmic polyadenylation element (CPE)-dependent manner. The chain is Neuroguidin from Homo sapiens (Human).